The sequence spans 500 residues: NAD(P)H-quinone oxidoreductase chain 4, chloroplastic (500 aa).

15 consecutive transmembrane segments (helical) span residues 4–24 (FPWL…IFFL), 35–55 (YTIF…CYHF), 87–107 (IGPI…AWPV), 113–130 (LFNF…GLFS), 134–154 (LLLF…LLSM), 167–187 (FILY…GIGL), 211–231 (IIFY…IPLH), 242–262 (HYST…YGLV), 272–292 (AHSI…IYAA), 305–325 (IAYS…SITD), 330–350 (GALL…FLAG), 364–384 (MGGI…FSMA), 386–406 (LALP…GIIT), 416–436 (ILIT…SLSM), and 463–483 (FLSI…DFIF).

It belongs to the complex I subunit 4 family.

The protein resides in the plastid. Its subcellular location is the chloroplast thylakoid membrane. The enzyme catalyses a plastoquinone + NADH + (n+1) H(+)(in) = a plastoquinol + NAD(+) + n H(+)(out). It catalyses the reaction a plastoquinone + NADPH + (n+1) H(+)(in) = a plastoquinol + NADP(+) + n H(+)(out). The sequence is that of NAD(P)H-quinone oxidoreductase chain 4, chloroplastic from Coffea arabica (Arabian coffee).